A 197-amino-acid polypeptide reads, in one-letter code: MPAEVHGSPPASLCPCQSVKFRPGLPEMALLTALDDTLPEEAQGPGRRMILLSTPSQSDALRACFERNLYPGIATKEELAQGIDIPEPRVQIWFQNERSCQLRQHRRQSRPWPGRRDPQKGRRKRTAITGSQTALLLRAFEKDRFPGIAAREELARETGLPESRIQIWFQNRRARHRGQSGRAPTQASIRCNAAPIG.

DNA-binding regions (homeobox) lie at residues 46–105 (GRRM…LRQH) and 121–180 (GRRK…RGQS). The disordered stretch occupies residues 101-127 (QLRQHRRQSRPWPGRRDPQKGRRKRTA).

Belongs to the paired homeobox family. In terms of tissue distribution, expressed in hepatoma Hep3B cells.

The protein localises to the nucleus. This chain is Double homeobox protein 5 (DUX5), found in Homo sapiens (Human).